A 464-amino-acid polypeptide reads, in one-letter code: tRNA modification GTPase MnmE (464 aa).

Arginine 29, glutamate 91, and arginine 131 together coordinate (6S)-5-formyl-5,6,7,8-tetrahydrofolate. The TrmE-type G domain occupies 226 to 387; sequence GLKVALAGKP…LINYLLKKCG (162 aa). Residue asparagine 236 coordinates K(+). GTP contacts are provided by residues 236–241, 255–261, and 280–283; these read NVGKSS, TDLPGTT, and DTAG. Position 240 (serine 240) interacts with Mg(2+). Residues threonine 255, leucine 257, and threonine 260 each coordinate K(+). Mg(2+) is bound at residue threonine 261. Position 464 (lysine 464) interacts with (6S)-5-formyl-5,6,7,8-tetrahydrofolate.

The protein belongs to the TRAFAC class TrmE-Era-EngA-EngB-Septin-like GTPase superfamily. TrmE GTPase family. As to quaternary structure, homodimer. Heterotetramer of two MnmE and two MnmG subunits. K(+) serves as cofactor.

The protein resides in the cytoplasm. In terms of biological role, exhibits a very high intrinsic GTPase hydrolysis rate. Involved in the addition of a carboxymethylaminomethyl (cmnm) group at the wobble position (U34) of certain tRNAs, forming tRNA-cmnm(5)s(2)U34. The sequence is that of tRNA modification GTPase MnmE from Prochlorococcus marinus (strain NATL1A).